A 290-amino-acid chain; its full sequence is NAD kinase (290 aa).

Catalysis depends on Asp-73, which acts as the Proton acceptor. Residues 73–74 (DG), 147–148 (ND), Arg-158, Arg-175, Asp-177, 188–193 (TAYALS), and Gln-246 each bind NAD(+).

The protein belongs to the NAD kinase family. A divalent metal cation serves as cofactor.

Its subcellular location is the cytoplasm. It carries out the reaction NAD(+) + ATP = ADP + NADP(+) + H(+). In terms of biological role, involved in the regulation of the intracellular balance of NAD and NADP, and is a key enzyme in the biosynthesis of NADP. Catalyzes specifically the phosphorylation on 2'-hydroxyl of the adenosine moiety of NAD to yield NADP. This chain is NAD kinase, found in Thiobacillus denitrificans (strain ATCC 25259 / T1).